We begin with the raw amino-acid sequence, 283 residues long: uncharacterized protein (283 aa).

Over residues 1-10 (MELNKTSESL) the composition is skewed to polar residues. 2 disordered regions span residues 1-99 (MELN…NPTS) and 255-283 (DQEG…EAHI). Basic and acidic residues-rich tracts occupy residues 14 to 34 (KIDH…REVR), 42 to 53 (SSTRQEKADRMP), and 61 to 71 (ESSKGSEEGAV).

The protein belongs to the chlamydial CPn_0705/CT_671/TC_0042 family.

This is an uncharacterized protein from Chlamydia trachomatis serovar D (strain ATCC VR-885 / DSM 19411 / UW-3/Cx).